A 241-amino-acid chain; its full sequence is Small ribosomal subunit protein uS2c (241 aa).

This sequence belongs to the universal ribosomal protein uS2 family.

It is found in the plastid. It localises to the chloroplast. The polypeptide is Small ribosomal subunit protein uS2c (rps2) (Porphyra purpurea (Red seaweed)).